The chain runs to 217 residues: GTP cyclohydrolase 1 (217 aa).

Residues Cys109, His112, and Cys180 each contribute to the Zn(2+) site.

This sequence belongs to the GTP cyclohydrolase I family. As to quaternary structure, toroid-shaped homodecamer, composed of two pentamers of five dimers.

It carries out the reaction GTP + H2O = 7,8-dihydroneopterin 3'-triphosphate + formate + H(+). Its pathway is cofactor biosynthesis; 7,8-dihydroneopterin triphosphate biosynthesis; 7,8-dihydroneopterin triphosphate from GTP: step 1/1. In Vibrio cholerae serotype O1 (strain ATCC 39315 / El Tor Inaba N16961), this protein is GTP cyclohydrolase 1.